A 123-amino-acid polypeptide reads, in one-letter code: Large ribosomal subunit protein bL19 (123 aa).

Belongs to the bacterial ribosomal protein bL19 family.

Functionally, this protein is located at the 30S-50S ribosomal subunit interface and may play a role in the structure and function of the aminoacyl-tRNA binding site. In Acinetobacter baylyi (strain ATCC 33305 / BD413 / ADP1), this protein is Large ribosomal subunit protein bL19.